The following is a 75-amino-acid chain: Phytosulfokines (75 aa).

A signal peptide spans 1-22 (MSSKAITLLLIALLFSLSLAQA). A propeptide spanning residues 23–66 (ARPLQPADSTKSVHVIPEKVHDEACEGVGEEECLMRRTLTAHVD) is cleaved from the precursor. A sulfotyrosine mark is found at Tyr-67 and Tyr-69. Residues 72-75 (DHNP) constitute a propeptide that is removed on maturation.

Belongs to the phytosulfokine family. Post-translationally, sulfation is important for activity and for the binding to a putative membrane receptor. Deletion of the sulfate groups of Tyr-67 and Tyr-69 resulted in compounds with respectively 0.6% and 4% of the activity. PSK-alpha is produced by endopeptidase digestion. PSK-beta is produced from PSK-alpha by exopeptidase digestion.

The protein resides in the secreted. Its function is as follows. Promotes plant cell differentiation, organogenesis and somatic embryogenesis as well as cell proliferation. This chain is Phytosulfokines (PSK), found in Asparagus officinalis (Garden asparagus).